Here is a 312-residue protein sequence, read N- to C-terminus: Malate dehydrogenase (312 aa).

NAD(+) is bound by residues 7 to 13 (GAAGGIG) and Asp-34. Arg-81 and Arg-87 together coordinate substrate. Residues Asn-94 and 117-119 (ITN) each bind NAD(+). Substrate contacts are provided by Asn-119 and Arg-153. His-177 serves as the catalytic Proton acceptor. Met-227 is an NAD(+) binding site.

It belongs to the LDH/MDH superfamily. MDH type 1 family. Homodimer.

It catalyses the reaction (S)-malate + NAD(+) = oxaloacetate + NADH + H(+). Catalyzes the reversible oxidation of malate to oxaloacetate. This chain is Malate dehydrogenase, found in Escherichia coli O17:K52:H18 (strain UMN026 / ExPEC).